We begin with the raw amino-acid sequence, 470 residues long: Calcium/manganese antiporter SLC30A10 (470 aa).

Residues 1–10 (MGRYSGKTCR) are Cytoplasmic-facing. Residues 11-31 (LLFMLVLTAAFFVAELVSGYL) form a helical membrane-spanning segment. At 32–34 (GNS) the chain is on the extracellular side. A helical transmembrane segment spans residues 35 to 55 (IALLSDSFNMLSDLISLCVGL). The Cytoplasmic portion of the chain corresponds to 56 to 81 (GSGYIARRGPRGSSATYGYVRAEVVG). Residues 82–102 (ALSNAVFLTALCFTIFVEAVL) form a helical membrane-spanning segment. The Extracellular portion of the chain corresponds to 103-113 (RLARPERIDDP). The chain crosses the membrane as a helical span at residues 114-134 (ELVLIVGALGLAVNVVGLLIF). The Cytoplasmic segment spans residues 135–233 (QDCGACFSRC…KSEALNIRGV (99 aa)). The tract at residues 146-223 (RGRRTRPSQQ…EPEETTKKEK (78 aa)) is disordered. The span at 171 to 184 (AATATAPGSGTAVT) shows a compositional bias: low complexity. A helical transmembrane segment spans residues 234–254 (LLHVMGDALGSVVVVITAIIF). Residues 255 to 270 (YVQPLRREDPCNWQCY) are Extracellular-facing. A helical transmembrane segment spans residues 271 to 291 (IDPSLTVVMVIIILSSAFPLI). Over 292–470 (KETAVILLQM…RQHYENSTHF (179 aa)) the chain is Cytoplasmic. Residues 300 to 470 (QMVPKGVNME…RQHYENSTHF (171 aa)) are required for plasma membrane localization. Residues 451–470 (QGQTLSKTQERQHYENSTHF) form a disordered region. Basic and acidic residues predominate over residues 458-470 (TQERQHYENSTHF).

This sequence belongs to the cation diffusion facilitator (CDF) transporter (TC 2.A.4) family. SLC30A subfamily. Forms homodimers. Forms heterodimers and high-molecular weight oligomers with SLC30A3, SLC30A2 and SLC30A4; heterodimerization is mediated by covalent-bound tyrosine residues, occurs probably in a tissue-specific manner and could mediate the intracellular zinc transport activity into early endosomes and recycling endosomes. In terms of tissue distribution, specifically expressed in fetal liver and fetal brain.

The protein resides in the cell membrane. Its subcellular location is the golgi apparatus membrane. It localises to the recycling endosome membrane. It is found in the early endosome membrane. The enzyme catalyses Mn(2+)(out) + Ca(2+)(in) = Mn(2+)(in) + Ca(2+)(out). The catalysed reaction is Zn(2+)(in) = Zn(2+)(out). Functionally, calcium:manganese antiporter of the plasma membrane mediating the efflux of intracellular manganese coupled to an active extracellular calcium exchange. Required for intracellular manganese homeostasis, an essential cation for the function of several enzymes, including some crucially important for the metabolism of neurotransmitters and other neuronal metabolic pathways. Manganese can also be cytotoxic and induce oxidative stress, mitochondrial dysfunction and apoptosis. Could also have an intracellular zinc ion transporter activity, directly regulating intracellular zinc ion homeostasis and more indirectly various signaling pathway and biological processes. The sequence is that of Calcium/manganese antiporter SLC30A10 from Mus musculus (Mouse).